The chain runs to 1096 residues: Pentatricopeptide repeat-containing protein At5g55840 (1096 aa).

27 PPR repeats span residues 122–156, 157–191, 192–226, 227–261, 262–296, 297–331, 332–366, 367–401, 402–436, 437–471, 472–506, 507–541, 542–576, 577–607, 612–646, 647–681, 683–717, 718–752, 753–787, 788–822, 823–857, 858–892, 893–927, 928–962, 963–997, 998–1032, and 1033–1068; these read NPSV…GFNP, SVYT…KICP, DVAT…GYAP, TIVT…GVDA, DVCT…MIHP, NEVT…GLSP, NHVT…GLTP, SEVS…GVCV, GRIT…GIDP, DIVT…GLSP, NGII…GHTR, DHFT…GILP, NTVS…GHHP, TFFT…LHAV, DTVM…SILP, DSYT…GNVL, NKVM…GHTP, DIVT…NGGP, NLTT…GILP, DKLT…GVEV, DRYT…GISL, DKDT…GISP, ESRK…KICP, PNVA…KLVP, TIAS…GLKL, DLVS…GFLA, and NATT…GFIT.

Belongs to the PPR family. P subfamily.

This Arabidopsis thaliana (Mouse-ear cress) protein is Pentatricopeptide repeat-containing protein At5g55840.